The following is a 313-amino-acid chain: LKENPNMCAYKAPSLDAREDMMIREVPRVGKEAATKAIKEWGQPMSKITHLIFCTTSGVALPGVDYELIVLLGLDPSVKRYMMYHQGCFAGGTVLRLAKDLAENNKDARVLIVCSENTAVTFRGPSETDMDSLVGQALFADGAAAIIIGSDPVPEVENPLFEIVSTDQKLVPNSHGAIGGLLREVGLTFYLNKSVPDIISQNINDALSKAFDPLGISDYNSIFWIAHPGGPAILDQVEQKVNLKPEKMNATRDVLSNYGNMSSACVFFIMDLMRKKSLEEGLKTTGEGLDWGVLFGFGPGLTIETVVLRSVAI.

Residue Cys88 is part of the active site. Residues Leu191 and 229 to 231 (GGP) contribute to the substrate site.

This sequence belongs to the thiolase-like superfamily. Chalcone/stilbene synthases family. Homodimer.

It is found in the cytoplasm. The catalysed reaction is 4-coumaroyl-CoA + 3 malonyl-CoA + 3 H(+) = trans-resveratrol + 4 CO2 + 4 CoA. It functions in the pathway phytoalexin biosynthesis; 3,4',5-trihydroxystilbene biosynthesis; 3,4',5-trihydroxystilbene from trans-4-coumarate: step 2/2. The chain is Putative stilbene synthase 2 from Arachis hypogaea (Peanut).